The sequence spans 83 residues: UPF0346 protein M28_Spy0369 (83 aa).

It belongs to the UPF0346 family.

The protein is UPF0346 protein M28_Spy0369 of Streptococcus pyogenes serotype M28 (strain MGAS6180).